A 302-amino-acid polypeptide reads, in one-letter code: uncharacterized protein (302 aa).

3 disordered regions span residues 15-34, 143-195, and 221-246; these read RHST…RFHK, GMPL…PSHL, and GSEA…RESV. Positions 172-189 are enriched in basic and acidic residues; it reads HSDENKATGQGRENRDQP.

This is an uncharacterized protein from Homo sapiens (Human).